The sequence spans 842 residues: Follistatin-related protein 4 (842 aa).

Residues 1–22 form the signal peptide; that stretch reads MKPGGFWLHLTLLGASLPAALG. Residues 81–135 form the Kazal-like domain; it reads KTGEPECQCLEACRPSYVPVCGSDGRFYENHCKLHRAACLLGKRITVIHSKDCFL. Cystine bridges form between Cys-87–Cys-119, Cys-93–Cys-112, and Cys-101–Cys-133. Residues 174-209 form the EF-hand domain; it reads QKRLLVESLFRDLDADGNGHLSSSELAQHVLKKQDL. The Ca(2+) site is built by Asp-187, Asp-189, Asn-191, His-193, and Glu-198. 2 consecutive Ig-like domains span residues 251–338 and 341–426; these read PEDR…LQVN and PVIR…EDIS. 2 disulfides stabilise this stretch: Cys-270–Cys-321 and Cys-362–Cys-413. Asn-318 carries an N-linked (GlcNAc...) asparagine glycan.

Its subcellular location is the secreted. This is Follistatin-related protein 4 (FSTL4) from Homo sapiens (Human).